An 886-amino-acid chain; its full sequence is DNA mismatch repair protein MutS (886 aa).

Position 641-648 (641-648) interacts with ATP; that stretch reads GPNMAGKS.

The protein belongs to the DNA mismatch repair MutS family.

Functionally, this protein is involved in the repair of mismatches in DNA. It is possible that it carries out the mismatch recognition step. This protein has a weak ATPase activity. The chain is DNA mismatch repair protein MutS from Rickettsia akari (strain Hartford).